The primary structure comprises 325 residues: Endo-1,4-beta-xylanase 2 (325 aa).

Residues 1–18 (MLYTSIFAAAMAASGAMA) form the signal peptide. The region spanning 26–325 (ASNCTTLDSF…KAAVKAIMAI (300 aa)) is the GH10 domain. Asparagine 28 is a glycosylation site (N-linked (GlcNAc...) asparagine). The Proton donor role is filled by glutamate 157. Glutamate 262 (nucleophile) is an active-site residue. A disulfide bond links cysteine 280 and cysteine 286.

The protein belongs to the glycosyl hydrolase 10 (cellulase F) family.

It localises to the secreted. It carries out the reaction Endohydrolysis of (1-&gt;4)-beta-D-xylosidic linkages in xylans.. The protein operates within glycan degradation; xylan degradation. Its function is as follows. Endo-1,4-beta-xylanase involved in the hydrolysis of xylan, a major structural heterogeneous polysaccharide found in plant biomass representing the second most abundant polysaccharide in the biosphere, after cellulose. In Claviceps purpurea (Ergot fungus), this protein is Endo-1,4-beta-xylanase 2 (xyl2).